A 115-amino-acid chain; its full sequence is Anamorsin homolog 2 (115 aa).

The segment at 30-115 is disordered; the sequence is VKEATKGEDC…KVKLNLTDDI (86 aa). Residues C39, C46, C49, and C51 each contribute to the [2Fe-2S] cluster site. The fe-S binding site A stretch occupies residues 39–51; the sequence is CTTRRRACKNCTC. Residues C77, C80, C88, and C91 each coordinate [4Fe-4S] cluster. Short sequence motifs (cx2C motif) lie at residues 77 to 80 and 88 to 91; these read CGNC and CATC. A fe-S binding site B region spans residues 77 to 91; the sequence is CGNCAKGDAFRCATC.

The protein belongs to the anamorsin family. Monomer. [2Fe-2S] cluster serves as cofactor. The cofactor is [4Fe-4S] cluster.

It is found in the cytoplasm. The protein resides in the mitochondrion intermembrane space. Functionally, component of the cytosolic iron-sulfur (Fe-S) protein assembly (CIA) machinery. Required for the maturation of extramitochondrial Fe-S proteins. Part of an electron transfer chain functioning in an early step of cytosolic Fe-S biogenesis, facilitating the de novo assembly of a [4Fe-4S] cluster on the cytosolic Fe-S scaffold complex. Electrons are transferred from NADPH via a FAD- and FMN-containing diflavin oxidoreductase. Together with the diflavin oxidoreductase, also required for the assembly of the diferric tyrosyl radical cofactor of ribonucleotide reductase (RNR), probably by providing electrons for reduction during radical cofactor maturation in the catalytic small subunit. This Trypanosoma cruzi (strain CL Brener) protein is Anamorsin homolog 2.